Here is a 139-residue protein sequence, read N- to C-terminus: Protein archease (139 aa).

Residues Asp-12, Asp-138, and Ile-139 each coordinate Ca(2+).

This sequence belongs to the archease family.

Functionally, activates the tRNA-splicing ligase complex by facilitating the enzymatic turnover of catalytic subunit RtcB. Acts by promoting the guanylylation of RtcB, a key intermediate step in tRNA ligation. Can also alter the NTP specificity of RtcB such that ATP, dGTP or ITP is used efficiently. In Saccharolobus islandicus (strain L.S.2.15 / Lassen #1) (Sulfolobus islandicus), this protein is Protein archease.